Consider the following 297-residue polypeptide: N-acetylmuramoyl-L-alanine amidase XlyA (297 aa).

A signal peptide spans 1–44 (MVNIIQDFIPVGANNRPGYAMTPLYITVHNTANTAVGADAAAHA). The N-acetylmuramoyl-L-alanine amidase domain occupies 45-140 (RYLKNPDTTT…KYWSGKECPR (96 aa)). One can recognise a LysM domain in the interval 159–203 (QTYVVKQGDTLTSIARAFGVTVAQLQEWNNIEDPNLIRVGQVLIV).

Belongs to the N-acetylmuramoyl-L-alanine amidase 2 family.

Its subcellular location is the secreted. It carries out the reaction Hydrolyzes the link between N-acetylmuramoyl residues and L-amino acid residues in certain cell-wall glycopeptides.. Its function is as follows. Autolysins are involved in some important biological processes such as cell separation, cell-wall turnover, competence for genetic transformation, formation of the flagella and sporulation. The protein is N-acetylmuramoyl-L-alanine amidase XlyA (xlyA) of Bacillus subtilis (strain 168).